The following is a 147-amino-acid chain: Male-specific protein scotti (147 aa).

Positions 55 to 93 (PQEPPLGVFPAQGGPNGPPRRRKKRSFYTMTKPTPPCQS) are disordered. Polar residues predominate over residues 82–93 (YTMTKPTPPCQS). N-linked (GlcNAc...) asparagine glycosylation is present at Asn-128.

Belongs to the male-specific scotti family. Expressed in primary spermatocytes and round spermatids. Low expression is seen in very short elongating cysts, but were detected at high levels in a few longer spermatid cysts.

Post-meiotically transcribed gene that has a role in late spermiogenesis; required for actin cone progression during spermatid individualization. This is Male-specific protein scotti from Drosophila melanogaster (Fruit fly).